A 286-amino-acid polypeptide reads, in one-letter code: Aquaporin NIP4-1 (286 aa).

The next 2 membrane-spanning stretches (helical) occupy residues 59–79 (VMVE…AALM) and 86–106 (LTFP…LSWL). An NPA 1 motif is present at residues 112-114 (NPA). The next 3 helical transmembrane spans lie at 133–153 (LYVA…NAVM), 173–193 (LPFL…ATVA), and 201–221 (TVGG…IGPV). The NPA 2 motif lies at 227–229 (NPA). Residues 241 to 261 (YDGVWIYVVAPVAGMLVGALC) form a helical membrane-spanning segment.

Belongs to the MIP/aquaporin (TC 1.A.8) family. NIP (TC 1.A.8.12) subfamily. In terms of tissue distribution, expressed in leaves and at lower levels in roots.

The protein resides in the membrane. Aquaporins facilitate the transport of water and small neutral solutes across cell membranes. This is Aquaporin NIP4-1 (NIP4-1) from Oryza sativa subsp. japonica (Rice).